The primary structure comprises 158 residues: Transcriptional regulator MraZ (158 aa).

SpoVT-AbrB domains follow at residues 5-52 and 91-134; these read IYET…TFSS and AVEC…SQAE.

Belongs to the MraZ family. As to quaternary structure, forms oligomers.

The protein localises to the cytoplasm. Its subcellular location is the nucleoid. The sequence is that of Transcriptional regulator MraZ from Geobacter sulfurreducens (strain ATCC 51573 / DSM 12127 / PCA).